Consider the following 325-residue polypeptide: MQTSLLKPKIIAVESLGENHAKVVMEPFERGYGHTLGNALRRVLLSSMVGYAPTEVTIAGVVHEYSTLDGVQEDVVNLLLNLKGVVFKLHNRDEVTVTLRKEGEGVVTAGDIELAHDCEVINPNHVIAHLSKGGKLDVQIKVEKGRGYVPGNVRRYGDETAKIIGRIVLDASFSPVRRVSYAVESARVEQRTDLDKLVMNIETSGVITPEEAIRQSARILVDQLSVFAALEGTETAAEAPSRAPQIDPILLRPVDDLELTVRSANCLKAENIYYIGDLIQRTENELLKTPNLGRKSLNEIKEVLASRGLTLGMKLENWPPAGLDK.

Positions 1–231 (MQTSLLKPKI…DQLSVFAALE (231 aa)) are alpha N-terminal domain (alpha-NTD). Positions 246-325 (IDPILLRPVD…ENWPPAGLDK (80 aa)) are alpha C-terminal domain (alpha-CTD).

Belongs to the RNA polymerase alpha chain family. In terms of assembly, homodimer. The RNAP catalytic core consists of 2 alpha, 1 beta, 1 beta' and 1 omega subunit. When a sigma factor is associated with the core the holoenzyme is formed, which can initiate transcription.

It catalyses the reaction RNA(n) + a ribonucleoside 5'-triphosphate = RNA(n+1) + diphosphate. In terms of biological role, DNA-dependent RNA polymerase catalyzes the transcription of DNA into RNA using the four ribonucleoside triphosphates as substrates. The polypeptide is DNA-directed RNA polymerase subunit alpha (Burkholderia thailandensis (strain ATCC 700388 / DSM 13276 / CCUG 48851 / CIP 106301 / E264)).